The following is a 382-amino-acid chain: Galactokinase (382 aa).

34–37 (EHTD) contributes to the substrate binding site. ATP is bound at residue 124–130 (GAGLSSS). 2 residues coordinate Mg(2+): S130 and E162. The Proton acceptor role is filled by D174. Position 223 (Y223) interacts with substrate.

The protein belongs to the GHMP kinase family. GalK subfamily.

Its subcellular location is the cytoplasm. The enzyme catalyses alpha-D-galactose + ATP = alpha-D-galactose 1-phosphate + ADP + H(+). The protein operates within carbohydrate metabolism; galactose metabolism. Catalyzes the transfer of the gamma-phosphate of ATP to D-galactose to form alpha-D-galactose-1-phosphate (Gal-1-P). This is Galactokinase from Salmonella arizonae (strain ATCC BAA-731 / CDC346-86 / RSK2980).